A 32-amino-acid polypeptide reads, in one-letter code: Periplasmic [NiFeSe] hydrogenase small subunit (32 aa).

2 residues coordinate [4Fe-4S] cluster: Cys18 and Cys21.

This sequence belongs to the [NiFe]/[NiFeSe] hydrogenase small subunit family. As to quaternary structure, heterodimer of a large and a small subunit. The cofactor is [3Fe-4S] cluster. It depends on [4Fe-4S] cluster as a cofactor.

Its subcellular location is the periplasm. It catalyses the reaction H2 + A = AH2. The sequence is that of Periplasmic [NiFeSe] hydrogenase small subunit from Desulfomicrobium norvegicum (strain DSM 1741 / NCIMB 8310) (Desulfovibrio baculatus (strain Norway 4)).